A 471-amino-acid chain; its full sequence is Desmin (471 aa).

The segment at 2 to 109 is head; the sequence is SQAYSSSQRV…QEFLTTRTNE (108 aa). At S7 the chain carries Phosphoserine; by CDK1. At S12 the chain carries Phosphoserine; by AURKB. At R16 the chain carries Omega-N-methylarginine. Position 17 is a phosphothreonine; by AURKB and ROCK1 (T17). S28 carries the post-translational modification Phosphoserine; by CDK1. Position 31 is a phosphoserine (S31). The residue at position 32 (S32) is a Phosphoserine; by CDK1. Asymmetric dimethylarginine; alternate is present on R37. R37 is modified (omega-N-methylarginine; alternate). S45 is subject to Phosphoserine. At R58 the chain carries ADP-ribosylarginine. S60 carries the phosphoserine; by AURKB modification. Position 70 is an omega-N-methylarginine (R70). Position 77 is a phosphothreonine; by ROCK1 (T77). Phosphoserine is present on S81. The region spanning 109–417 is the IF rod domain; sequence EKVELQELND…KLLEGEESRI (309 aa). The interval 110 to 142 is coil 1A; it reads KVELQELNDRFANYIEKVRFLEQQNAALAAEVN. Residues 143–152 form a linker 1 region; that stretch reads RLKGREPTRV. Positions 153–253 are coil 1B; sequence AEIYEEELRE…HEEEIRELQA (101 aa). A linker 12 region spans residues 254–269; sequence QLQEQQVQVEMDMSKP. The interaction with NEB stretch occupies residues 269–416; the sequence is PDLTAALRDI…RKLLEGEESR (148 aa). The segment at 270 to 288 is coil 2A; the sequence is DLTAALRDIRAQYETIAAK. The segment at 289 to 296 is linker 2; the sequence is NISEAEEW. Phosphoserine occurs at positions 291, 359, 362, and 425. A coil 2B region spans residues 297 to 413; the sequence is YKSKVSDLTQ…ATYRKLLEGE (117 aa). Residues 414–471 are tail; that stretch reads ESRINLPIQTFSALNFRETSPEQRGSEVHTKKTVMIKTIETRDGEVVSEATQQQHEVL. The tract at residues 439 to 454 is interaction with CRYAB; that stretch reads SEVHTKKTVMIKTIET.

This sequence belongs to the intermediate filament family. Homomer. Interacts with DST. Interacts with MTM1. Interacts with EPPK1; interaction is dependent of higher-order structure of intermediate filament. Interacts with CRYAB. Interacts with NEB (via nebulin repeats 160-164). Interacts (via rod region) with NEBL (via nebulin repeats 1-5). Interacts with ASB2; the interaction targets DES for proteasomal degradation. Interacts with PKP1. Interacts with FLII. Post-translationally, ADP-ribosylation prevents ability to form intermediate filaments. In terms of processing, phosphorylation at Ser-7, Ser-28 and Ser-32 by CDK1 and phosphorylation at Ser-60 by AURKB contribute to efficient separation of desmin intermediate filaments during mitosis. Ubiquitination by a SCF-like complex containing ASB2 leads to proteasomal degradation.

Its subcellular location is the cytoplasm. It localises to the myofibril. It is found in the sarcomere. The protein localises to the z line. The protein resides in the cell membrane. Its subcellular location is the sarcolemma. It localises to the nucleus. It is found in the cell tip. The protein localises to the nucleus envelope. Functionally, muscle-specific type III intermediate filament essential for proper muscular structure and function. Plays a crucial role in maintaining the structure of sarcomeres, inter-connecting the Z-disks and forming the myofibrils, linking them not only to the sarcolemmal cytoskeleton, but also to the nucleus and mitochondria, thus providing strength for the muscle fiber during activity. In adult striated muscle they form a fibrous network connecting myofibrils to each other and to the plasma membrane from the periphery of the Z-line structures. May act as a sarcomeric microtubule-anchoring protein: specifically associates with detyrosinated tubulin-alpha chains, leading to buckled microtubules and mechanical resistance to contraction. Required for nuclear membrane integrity, via anchoring at the cell tip and nuclear envelope, resulting in maintenance of microtubule-derived intracellular mechanical forces. Contributes to the transcriptional regulation of the NKX2-5 gene in cardiac progenitor cells during a short period of cardiomyogenesis and in cardiac side population stem cells in the adult. Plays a role in maintaining an optimal conformation of nebulette (NEB) on heart muscle sarcomeres to bind and recruit cardiac alpha-actin. The sequence is that of Desmin (DES) from Sus scrofa (Pig).